The chain runs to 535 residues: E3 ubiquitin-protein ligase rnf168 (535 aa).

The RING-type zinc finger occupies 16-55; sequence CPICQEILLEPVTLPCKHTLCNPCFQMTVEKASLCCPFCR. The LR motif 1 motif lies at 112 to 130; that stretch reads LCKPGEIRQEYEAEVSKIE. The UMI motif motif lies at 145–153; sequence EDYIQKLLA. 2 short sequence motifs (MIU motif) span residues 170–193 and 406–429; these read IEEQ…LSNA and RRKQ…KELK. The segment covering 429 to 443 has biased composition (basic and acidic residues); the sequence is KQVNRGKGSPDEYQL. The interval 429–535 is disordered; it reads KQVNRGKGSP…LDLFQRSAGK (107 aa). The LR motif 2 motif lies at 433-444; it reads RGKGSPDEYQLR. Polar residues-rich tracts occupy residues 462 to 478 and 492 to 507; these read NEQT…QSGY and ITSS…TNTE.

Belongs to the RNF168 family. In terms of assembly, monomer.

It localises to the nucleus. The catalysed reaction is S-ubiquitinyl-[E2 ubiquitin-conjugating enzyme]-L-cysteine + [acceptor protein]-L-lysine = [E2 ubiquitin-conjugating enzyme]-L-cysteine + N(6)-ubiquitinyl-[acceptor protein]-L-lysine.. It participates in protein modification; protein ubiquitination. Functionally, E3 ubiquitin-protein ligase required for accumulation of repair proteins to sites of DNA damage. Acts with ube2n/ubc13 to amplify the rnf8-dependent histone ubiquitination. Recruited to sites of DNA damage at double-strand breaks (DSBs) by binding to ubiquitinated histone H2A and ubiquitinates histone H2A and H2AX, leading to amplify the rnf8-dependent H2A ubiquitination and promoting the formation of 'Lys-63'-linked ubiquitin conjugates. This leads to concentrate ubiquitinated histones H2A and H2AX at DNA lesions to the threshold required for recruitment of tp53bp1 and brca1. Catalyzes monoubiquitination of 'Lys-13' and 'Lys-15' of nucleosomal histone H2A (H2AK13Ub and H2AK15Ub, respectively). The chain is E3 ubiquitin-protein ligase rnf168 from Xenopus tropicalis (Western clawed frog).